Reading from the N-terminus, the 460-residue chain is Bifunctional protein GlmU (460 aa).

A pyrophosphorylase region spans residues 1-233; it reads MLDIVIMAAG…ETEVLGVNSP (233 aa). Residues K21, Q76, and 81–82 each bind UDP-N-acetyl-alpha-D-glucosamine; that span reads GT. Mg(2+) is bound at residue D105. Positions 140, 158, and 231 each coordinate UDP-N-acetyl-alpha-D-glucosamine. N231 is a binding site for Mg(2+). The interval 234–254 is linker; sequence LQLADLERRLQRKQAEALLEA. Residues 255–460 are N-acetyltransferase; that stretch reads GVRLADPARF…AGWQRPQKKR (206 aa). R337 and K355 together coordinate UDP-N-acetyl-alpha-D-glucosamine. H367 functions as the Proton acceptor in the catalytic mechanism. 2 residues coordinate UDP-N-acetyl-alpha-D-glucosamine: Y370 and N381. Acetyl-CoA is bound by residues A384, 390–391, S409, G427, and R444; that span reads NY.

It in the N-terminal section; belongs to the N-acetylglucosamine-1-phosphate uridyltransferase family. The protein in the C-terminal section; belongs to the transferase hexapeptide repeat family. In terms of assembly, homotrimer. It depends on Mg(2+) as a cofactor.

The protein localises to the cytoplasm. It carries out the reaction alpha-D-glucosamine 1-phosphate + acetyl-CoA = N-acetyl-alpha-D-glucosamine 1-phosphate + CoA + H(+). The enzyme catalyses N-acetyl-alpha-D-glucosamine 1-phosphate + UTP + H(+) = UDP-N-acetyl-alpha-D-glucosamine + diphosphate. It functions in the pathway nucleotide-sugar biosynthesis; UDP-N-acetyl-alpha-D-glucosamine biosynthesis; N-acetyl-alpha-D-glucosamine 1-phosphate from alpha-D-glucosamine 6-phosphate (route II): step 2/2. The protein operates within nucleotide-sugar biosynthesis; UDP-N-acetyl-alpha-D-glucosamine biosynthesis; UDP-N-acetyl-alpha-D-glucosamine from N-acetyl-alpha-D-glucosamine 1-phosphate: step 1/1. Its pathway is bacterial outer membrane biogenesis; LPS lipid A biosynthesis. Catalyzes the last two sequential reactions in the de novo biosynthetic pathway for UDP-N-acetylglucosamine (UDP-GlcNAc). The C-terminal domain catalyzes the transfer of acetyl group from acetyl coenzyme A to glucosamine-1-phosphate (GlcN-1-P) to produce N-acetylglucosamine-1-phosphate (GlcNAc-1-P), which is converted into UDP-GlcNAc by the transfer of uridine 5-monophosphate (from uridine 5-triphosphate), a reaction catalyzed by the N-terminal domain. In Methylibium petroleiphilum (strain ATCC BAA-1232 / LMG 22953 / PM1), this protein is Bifunctional protein GlmU.